Reading from the N-terminus, the 356-residue chain is NADH-quinone oxidoreductase subunit H (356 aa).

9 helical membrane-spanning segments follow: residues 17–37 (TGGI…LLLA), 51–71 (PNVV…KFVL), 83–103 (VVFI…WAVV), 116–136 (VGIL…IMGG), 162–182 (IGLI…STIV), 202–222 (LVLL…ALAE), 261–281 (IVLM…PGFP), 295–315 (LFLA…FAMA), and 334–354 (VFLP…VFGP).

Belongs to the complex I subunit 1 family. NDH-1 is composed of 14 different subunits. Subunits NuoA, H, J, K, L, M, N constitute the membrane sector of the complex.

Its subcellular location is the cell inner membrane. It carries out the reaction a quinone + NADH + 5 H(+)(in) = a quinol + NAD(+) + 4 H(+)(out). Its function is as follows. NDH-1 shuttles electrons from NADH, via FMN and iron-sulfur (Fe-S) centers, to quinones in the respiratory chain. The immediate electron acceptor for the enzyme in this species is believed to be ubiquinone. Couples the redox reaction to proton translocation (for every two electrons transferred, four hydrogen ions are translocated across the cytoplasmic membrane), and thus conserves the redox energy in a proton gradient. This subunit may bind ubiquinone. The sequence is that of NADH-quinone oxidoreductase subunit H from Caulobacter vibrioides (strain ATCC 19089 / CIP 103742 / CB 15) (Caulobacter crescentus).